The chain runs to 340 residues: S-adenosylmethionine:tRNA ribosyltransferase-isomerase (340 aa).

The protein belongs to the QueA family. Monomer.

The protein resides in the cytoplasm. It carries out the reaction 7-aminomethyl-7-carbaguanosine(34) in tRNA + S-adenosyl-L-methionine = epoxyqueuosine(34) in tRNA + adenine + L-methionine + 2 H(+). The protein operates within tRNA modification; tRNA-queuosine biosynthesis. Its function is as follows. Transfers and isomerizes the ribose moiety from AdoMet to the 7-aminomethyl group of 7-deazaguanine (preQ1-tRNA) to give epoxyqueuosine (oQ-tRNA). The polypeptide is S-adenosylmethionine:tRNA ribosyltransferase-isomerase (Campylobacter concisus (strain 13826)).